Here is a 256-residue protein sequence, read N- to C-terminus: MTPDIRPLVAGNWKMNGTRASLDQIKAMAEGVKGDLSARVDALICPPATLLYVATALCDDSPLMIGAQDCHQKQSGAHTGEVSAEMVADCFGTHVIVGHSERRTDHGEGDALVRAKTEAAHGADLVAIVCVGETEEERKAGRTLDILKRQLSESLPDQATAENTVIAYEPVWAIGTGLTPTVSDVEEAHAFMRRELVSRFGAEGGKMRILYGGSVKPSNAKELMGVANVDGALIGGASLKADDFLAIYRAYEELTA.

A substrate-binding site is contributed by 12 to 14 (NWK). Residue His-99 is the Electrophile of the active site. Residue Glu-169 is the Proton acceptor of the active site. Substrate-binding positions include Gly-175, Ser-214, and 235-236 (GG).

This sequence belongs to the triosephosphate isomerase family. In terms of assembly, homodimer.

Its subcellular location is the cytoplasm. It carries out the reaction D-glyceraldehyde 3-phosphate = dihydroxyacetone phosphate. The protein operates within carbohydrate biosynthesis; gluconeogenesis. It functions in the pathway carbohydrate degradation; glycolysis; D-glyceraldehyde 3-phosphate from glycerone phosphate: step 1/1. Functionally, involved in the gluconeogenesis. Catalyzes stereospecifically the conversion of dihydroxyacetone phosphate (DHAP) to D-glyceraldehyde-3-phosphate (G3P). In Rhizobium meliloti (strain 1021) (Ensifer meliloti), this protein is Triosephosphate isomerase.